A 53-amino-acid polypeptide reads, in one-letter code: Cytochrome c oxidase subunit 7e (53 aa).

As to quaternary structure, slime mold cytochrome c oxidase consists of at least seven different polypeptides species, subunits I, II, III, IV, V, VI, and VIIe/s in order of MW.

It localises to the mitochondrion inner membrane. The catalysed reaction is 4 Fe(II)-[cytochrome c] + O2 + 8 H(+)(in) = 4 Fe(III)-[cytochrome c] + 2 H2O + 4 H(+)(out). Functionally, this protein is one of the nuclear-coded polypeptide chains of cytochrome c oxidase, the terminal oxidase in mitochondrial electron transport. The polypeptide is Cytochrome c oxidase subunit 7e (cxgE) (Dictyostelium discoideum (Social amoeba)).